Here is a 471-residue protein sequence, read N- to C-terminus: UDP-N-acetylmuramate--L-alanine ligase (471 aa).

114–120 serves as a coordination point for ATP; it reads GTHGKTT.

This sequence belongs to the MurCDEF family.

It is found in the cytoplasm. The catalysed reaction is UDP-N-acetyl-alpha-D-muramate + L-alanine + ATP = UDP-N-acetyl-alpha-D-muramoyl-L-alanine + ADP + phosphate + H(+). Its pathway is cell wall biogenesis; peptidoglycan biosynthesis. In terms of biological role, cell wall formation. The sequence is that of UDP-N-acetylmuramate--L-alanine ligase from Sinorhizobium medicae (strain WSM419) (Ensifer medicae).